The following is a 67-amino-acid chain: UPF0434 protein Patl_1782 (67 aa).

This sequence belongs to the UPF0434 family.

The chain is UPF0434 protein Patl_1782 from Pseudoalteromonas atlantica (strain T6c / ATCC BAA-1087).